Consider the following 263-residue polypeptide: Tryptophan synthase alpha chain (263 aa).

Active-site proton acceptor residues include glutamate 49 and aspartate 60.

Belongs to the TrpA family. Tetramer of two alpha and two beta chains.

It catalyses the reaction (1S,2R)-1-C-(indol-3-yl)glycerol 3-phosphate + L-serine = D-glyceraldehyde 3-phosphate + L-tryptophan + H2O. Its pathway is amino-acid biosynthesis; L-tryptophan biosynthesis; L-tryptophan from chorismate: step 5/5. Its function is as follows. The alpha subunit is responsible for the aldol cleavage of indoleglycerol phosphate to indole and glyceraldehyde 3-phosphate. The polypeptide is Tryptophan synthase alpha chain (Clostridium kluyveri (strain NBRC 12016)).